The chain runs to 201 residues: LexA repressor 1 (201 aa).

The H-T-H motif DNA-binding region spans 28–48 (LREIAAHLKISGTLGVSKHLE). Active-site for autocatalytic cleavage activity residues include serine 120 and lysine 157.

This sequence belongs to the peptidase S24 family. Homodimer.

The enzyme catalyses Hydrolysis of Ala-|-Gly bond in repressor LexA.. Its function is as follows. Represses a number of genes involved in the response to DNA damage (SOS response), including recA and lexA. In the presence of single-stranded DNA, RecA interacts with LexA causing an autocatalytic cleavage which disrupts the DNA-binding part of LexA, leading to derepression of the SOS regulon and eventually DNA repair. The sequence is that of LexA repressor 1 from Geobacter sulfurreducens (strain ATCC 51573 / DSM 12127 / PCA).